Here is a 539-residue protein sequence, read N- to C-terminus: Beta-agarase A (539 aa).

A signal peptide spans 1–19 (MKKNYLLLYFIFLLCGSIA). Residues 21 to 289 (QDWNGIPVPA…WIRVYKPVAV (269 aa)) form the GH16 domain. Residues Trp-73, 82-92 (NAPQAWTNGSQ), 96-98 (QAQ), and Glu-144 contribute to the substrate site. Glu-147 serves as the catalytic Nucleophile. Glu-152 (proton donor) is an active-site residue. Substrate is bound by residues Arg-176 and Asp-271. Residues 332-353 (WANTNDIGSRDRGASNGRNNIN) form a disordered region.

The protein belongs to the glycosyl hydrolase 16 family. In terms of assembly, monomer. Post-translationally, proteolytically cleaved into mature beta-agarase A catalytic chain (AgaAc).

The protein localises to the secreted. It carries out the reaction Hydrolysis of (1-&gt;4)-beta-D-galactosidic linkages in agarose, giving the tetramer as the predominant product.. Cleaves the beta-1,4-linkages between beta-D-galactose and alpha-L-3,6-anhydro-galactose residues in agarose. Cleaves agarose in a random manner with retention of the anomeric-bond configuration, producing beta-anomers that give rise progressively to alpha-anomers when mutarotation takes place. The sequence is that of Beta-agarase A (agaA) from Zobellia galactanivorans (strain DSM 12802 / CCUG 47099 / CIP 106680 / NCIMB 13871 / Dsij).